Reading from the N-terminus, the 90-residue chain is Actobindin-B/C (90 aa).

WH2 domains lie at 4-21 (TANP…LKHA) and 40-57 (DHSS…LKHV). The tract at residues 57–90 (VETQDRSAPVTEGATVKSNNHSALLGEIKSKAQE) is disordered.

Monomer.

In terms of biological role, is able to bind two actin monomers at high concentrations of G-actin. Inhibits actin polymerization by sequestering G-actin and stabilizing actin dimers. The chain is Actobindin-B/C (abnB) from Dictyostelium discoideum (Social amoeba).